The chain runs to 447 residues: Maintenance of mitochondrial morphology protein 1 (447 aa).

Residues 1-109 (MKSPNETSFT…VFSAWSFAQG (109 aa)) are Lumenal-facing. Residues 110–130 (LVIGQLSVIVVLIFFIKFFIF) form a helical membrane-spanning segment. Residues 131 to 447 (SEGPIKTEGP…DDISMKSTDL (317 aa)) are Cytoplasmic-facing. The SMP-LTD domain maps to 208–421 (SPETLDWFNV…EPRFQFIKLP (214 aa)).

The protein belongs to the MMM1 family. Homodimer. Component of the ER-mitochondria encounter structure (ERMES) or MDM complex, composed of MMM1, MDM10, MDM12 and MDM34. An MMM1 homodimer associates with one molecule of MDM12 on each side in a pairwise head-to-tail manner, and the SMP-LTD domains of MMM1 and MDM12 generate a continuous hydrophobic tunnel for phospholipid trafficking.

Its subcellular location is the endoplasmic reticulum membrane. Functionally, component of the ERMES/MDM complex, which serves as a molecular tether to connect the endoplasmic reticulum (ER) and mitochondria. Components of this complex are involved in the control of mitochondrial shape and protein biogenesis, and function in nonvesicular lipid trafficking between the ER and mitochondria. The MDM12-MMM1 subcomplex functions in the major beta-barrel assembly pathway that is responsible for biogenesis of all outer membrane beta-barrel proteins, and acts in a late step after the SAM complex. The MDM10-MDM12-MMM1 subcomplex further acts in the TOM40-specific pathway after the action of the MDM12-MMM1 complex. Essential for establishing and maintaining the structure of mitochondria and maintenance of mtDNA nucleoids. This Lachancea thermotolerans (strain ATCC 56472 / CBS 6340 / NRRL Y-8284) (Yeast) protein is Maintenance of mitochondrial morphology protein 1.